Consider the following 210-residue polypeptide: Small ribosomal subunit protein uS3 (210 aa).

One can recognise a KH type-2 domain in the interval 38-106 (IRAWLKKRLA…EVQINIVEIR (69 aa)).

Belongs to the universal ribosomal protein uS3 family. Part of the 30S ribosomal subunit. Forms a tight complex with proteins S10 and S14.

Its function is as follows. Binds the lower part of the 30S subunit head. Binds mRNA in the 70S ribosome, positioning it for translation. The sequence is that of Small ribosomal subunit protein uS3 from Magnetococcus marinus (strain ATCC BAA-1437 / JCM 17883 / MC-1).